The following is a 1597-amino-acid chain: Protein STU1 (1597 aa).

Disordered regions lie at residues Gly-220 to Ser-265, Asp-519 to His-958, Asp-1005 to Thr-1154, and Ser-1307 to Val-1332. Residues Ala-535–Val-552 show a composition bias toward basic and acidic residues. A compositionally biased stretch (low complexity) spans Ser-577–Arg-605. Polar residues-rich tracts occupy residues Ala-610–Arg-622 and Pro-632–Arg-645. Basic and acidic residues-rich tracts occupy residues Gly-660–Arg-673 and Glu-694–Arg-708. The segment covering Glu-709–Ser-726 has biased composition (polar residues). The span at Glu-765 to Ala-781 shows a compositional bias: low complexity. Polar residues-rich tracts occupy residues Pro-791–Pro-801 and Pro-808–Ser-822. Positions Glu-832–Glu-846 are enriched in basic and acidic residues. 3 stretches are compositionally biased toward polar residues: residues Asp-918–Pro-933, Thr-1013–Ala-1025, and Asn-1036–Pro-1045. Residues Ala-1081 to Lys-1091 are compositionally biased toward basic and acidic residues. A compositionally biased stretch (acidic residues) spans Glu-1108–Ala-1119. The span at Asn-1122 to Pro-1139 shows a compositional bias: polar residues. The stretch at Pro-1537 to Ser-1573 is one HEAT repeat.

The protein belongs to the CLASP family. Interacts with microtubules.

The protein localises to the cytoplasm. Its subcellular location is the cytoskeleton. The protein resides in the nucleus. It localises to the spindle. Functionally, microtubule binding protein that promotes the stabilization of dynamic microtubules. Required for mitotic spindle formation. This is Protein STU1 (STU1) from Yarrowia lipolytica (strain CLIB 122 / E 150) (Yeast).